We begin with the raw amino-acid sequence, 113 residues long: Large ribosomal subunit protein bL19 (113 aa).

The protein belongs to the bacterial ribosomal protein bL19 family.

This protein is located at the 30S-50S ribosomal subunit interface and may play a role in the structure and function of the aminoacyl-tRNA binding site. In Corynebacterium kroppenstedtii (strain DSM 44385 / JCM 11950 / CIP 105744 / CCUG 35717), this protein is Large ribosomal subunit protein bL19.